We begin with the raw amino-acid sequence, 229 residues long: Deleted in azoospermia-like (229 aa).

The region spanning 47-128 (NTLFVGGIDM…PAIMKERSSR (82 aa)) is the RRM domain. Residues 172–198 (PYSYSSPPGIMVPQVPMNYAQTTYAYQ) enclose the DAZ domain.

This sequence belongs to the RRM DAZ family. In terms of tissue distribution, testis and ovary specific. In ovary, it is localized in the cortex of oocytes. At the onset of embryogenesis, maternal product is located at the vegetal pole, before migrating toward blastomeres through cytoplasmic streams as early embryogenesis proceededs.

It is found in the cytoplasm. Its function is as follows. RNA-binding protein involved in gametogenesis in both males and females. Acts by binding to the 3'-UTR of mRNA, specifically recognizing GUU triplets, and promoting the translation of key transcripts. Establishes oocyte polarity through interaction with Bucky ball (BUC). Interacts with Bucky ball (BUC) mRNA to mediate Balbiani body formation and oocyte polarity during early oogenesis. This chain is Deleted in azoospermia-like (dazl), found in Danio rerio (Zebrafish).